The following is a 66-amino-acid chain: Putative inactive (E)-beta-ocimene synthase, chloroplastic (66 aa).

The transit peptide at 1-25 directs the protein to the chloroplast; the sequence is MAAHNLCFNSAFVCNVHHQKTQHFP.

It belongs to the terpene synthase family. Tpsb subfamily. As to expression, expressed exclusively in flowers.

Its subcellular location is the plastid. It localises to the chloroplast. This is Putative inactive (E)-beta-ocimene synthase, chloroplastic (TPS02) from Arabidopsis thaliana (Mouse-ear cress).